The chain runs to 896 residues: Protein translocase subunit SecA (896 aa).

Residues glutamine 87, 105-109 (GEGKT), and aspartate 512 each bind ATP. Disordered stretches follow at residues 565-584 (RRIDNQLRGRSGRQGDPGSS) and 840-896 (EAAQ…AHEA). Zn(2+) is bound by residues cysteine 876, cysteine 878, cysteine 887, and histidine 888. Over residues 882–896 (KKYKHCHGNRAAHEA) the composition is skewed to basic residues.

Belongs to the SecA family. As to quaternary structure, monomer and homodimer. Part of the essential Sec protein translocation apparatus which comprises SecA, SecYEG and auxiliary proteins SecDF-YajC and YidC. It depends on Zn(2+) as a cofactor.

The protein localises to the cell inner membrane. It is found in the cytoplasm. It catalyses the reaction ATP + H2O + cellular proteinSide 1 = ADP + phosphate + cellular proteinSide 2.. Part of the Sec protein translocase complex. Interacts with the SecYEG preprotein conducting channel. Has a central role in coupling the hydrolysis of ATP to the transfer of proteins into and across the cell membrane, serving both as a receptor for the preprotein-SecB complex and as an ATP-driven molecular motor driving the stepwise translocation of polypeptide chains across the membrane. The sequence is that of Protein translocase subunit SecA from Mannheimia succiniciproducens (strain KCTC 0769BP / MBEL55E).